Consider the following 355-residue polypeptide: 12-oxophytodienoate reductase-like protein (355 aa).

Residues 30 to 32 (ALT), A63, and Q105 each bind FMN. A substrate-binding site is contributed by 175–178 (NASS). The Proton donor role is filled by Y181. Residue R265 coordinates substrate. Residues G288 and 309–310 (GR) contribute to the FMN site.

The protein belongs to the NADH:flavin oxidoreductase/NADH oxidase family. Requires FMN as cofactor. As to expression, weakly expressed in flowers and roots.

The protein localises to the cytoplasm. May be involved in the biosynthesis or metabolism of oxylipin signaling molecules. In Solanum lycopersicum (Tomato), this protein is 12-oxophytodienoate reductase-like protein (OPR2).